A 386-amino-acid polypeptide reads, in one-letter code: Demethylsterigmatocystin 6-O-methyltransferase (386 aa).

A substrate-binding site is contributed by 137-150 (FDISGPCTQILPDF). The substrate binding stretch occupies residues 177 to 197 (MFEWMPQHPKHMESLGHLMAL). Residues 228-229 (GG), Asp253, 273-274 (NF), and Arg289 contribute to the S-adenosyl-L-methionine site. The active-site Proton acceptor is His293.

This sequence belongs to the class I-like SAM-binding methyltransferase superfamily. Cation-independent O-methyltransferase family. COMT subfamily.

It catalyses the reaction 6-demethylsterigmatocystin + S-adenosyl-L-methionine = sterigmatocystin + S-adenosyl-L-homocysteine + H(+). It participates in mycotoxin biosynthesis; aflatoxin biosynthesis. Demethylsterigmatocystin 6-O-methyltransferase; part of the gene cluster that mediates the biosynthesis of aflatoxins, a group of polyketide-derived furanocoumarins, and part of the most toxic and carcinogenic compounds among the known mycotoxins. The four major aflatoxins produced by A.parasiticus are aflatoxin B1 (AFB1), aflatoxin B2 (AFB2), aflatoxin G1 (AFG1) and aflatoxin G2 (AFG2). Within the aflatoxin pathway, the methyltransferase aflO then catalyzes the modification of demethylsterigmatocystin (DMST) to sterigmatocystin (ST), and of dihydrodemethylsterigmatocystin (DMDHST) to dihydrosterigmatocystin (DHST). The biosynthesis of aflatoxins begins with the norsolorinic acid synthase aflC that combines a hexanoyl starter unit produced by the fatty acid synthase aflA/aflB and 7 malonyl-CoA extender units to synthesize the precursor NOR. The second step is the conversion of NOR to averantin and requires the norsolorinic acid ketoreductase aflD, which catalyzes the dehydration of norsolorinic acid to form (1'S)-averantin. The norsolorinic acid reductases aflE and aflF may also play a role in the conversion of NOR to AVN. The cytochrome P450 monooxygenase aflG then catalyzes the hydroxylation of AVN to 5'hydroxyaverantin (HAVN). The next step is performed by the 5'-hydroxyaverantin dehydrogenase aflH that transforms HAVN to 5'-oxoaverantin (OAVN) which is further converted to averufin (AVF) by aflK that plays a dual role in the pathway, as a 5'-oxoaverantin cyclase that mediates conversion of 5'-oxoaverantin, as well as a versicolorin B synthase in a later step in the pathway. The averufin oxidase aflI catalyzes the conversion of AVF to versiconal hemiacetal acetate (VHA). VHA is then the substrate for the versiconal hemiacetal acetate esterase aflJ to yield versiconal (VAL). Versicolorin B synthase aflK then converts VAL to versicolorin B (VERB) by closing the bisfuran ring of aflatoxin which is required for DNA-binding, thus giving to aflatoxin its activity as a mutagen. Then, the activity of the versicolorin B desaturase aflL leads to versicolorin A (VERA). A branch point starts from VERB since it can also be converted to dihydrodemethylsterigmatocystin (DMDHST), probably also by aflL, VERA being a precursor for aflatoxins B1 and G1, and DMDHST for aflatoxins B2 and G2. Next, the versicolorin reductase aflM and the cytochrome P450 monooxygenase aflN are involved in conversion of VERA to demethylsterigmatocystin (DMST). AflX and aflY seem also involved in this step, through probable aflX-mediated epoxide ring-opening step following versicolorin A oxidation and aflY-mediated Baeyer-Villiger oxidation required for the formation of the xanthone ring. The methyltransferase aflO then leads to the modification of DMST to sterigmatocystin (ST), and of DMDHST to dihydrosterigmatocystin (DHST). Both ST and DHST are then substrates of the O-methyltransferase aflP to yield O-methylsterigmatocystin (OMST) and dihydro-O-methylsterigmatocystin (DHOMST), respectively. Finally OMST is converted to aflatoxins B1 and G1, and DHOMST to aflatoxins B2 and G2, via the action of several enzymes including O-methylsterigmatocystin oxidoreductase aflQ, the cytochrome P450 monooxygenase aflU, but also the NADH-dependent flavin oxidoreductase nadA which is specifically required for the synthesis of AFG1. The protein is Demethylsterigmatocystin 6-O-methyltransferase of Aspergillus parasiticus (strain ATCC 56775 / NRRL 5862 / SRRC 143 / SU-1).